Reading from the N-terminus, the 485-residue chain is MKPTIALVGRPNVGKSTLFNRLTRTKDALVHDLPGLTRDRHYGHGKVGSKPYLVIDTGGFEPVVDSGILHEMAKQTLQAVDEADAVVFLVDGRTGLTPQDKIIADRLRQSPRPVYLAVNKGEGGNRAVLAAEFYELALGDPYVISGAHGDGVYYLIEDILETFPEPEKEEEEAKHPVFAVIGRPNVGKSTLVNAILGEERVIAFDMAGTTRDSIHIDFEREGKPFTIIDTAGVRRRGKVDEAVEKFSVIKAMQAVEAANVAVLVLDAQQDIADQDATIAGFALEAGRALVVAVNKWDGISEERREQVKRDINRKLYFLDFAKFHFISALKERGIDGLFDSIQAAYNAAMIKMPTPKITRVLQSAIERQQPPRAGLVRPKMRYAHQGGMNPPVIVVHGNSLHAISDSYTRYLTQTFRKAFNLQGTPLRIQYNVSENPYENADDKPKKKPLRRVSLSNRIEKREGRKEEKNRFKKKTKVSVKKQFSK.

EngA-type G domains are found at residues 3–167 (PTIA…PEPE) and 176–349 (PVFA…NAAM). GTP is bound by residues 9 to 16 (GRPNVGKS), 56 to 60 (DTGGF), 119 to 122 (NKGE), 182 to 189 (GRPNVGKS), 229 to 233 (DTAGV), and 294 to 297 (NKWD). Residues 350–434 (IKMPTPKITR…PLRIQYNVSE (85 aa)) form the KH-like domain. The segment at 435–485 (NPYENADDKPKKKPLRRVSLSNRIEKREGRKEEKNRFKKKTKVSVKKQFSK) is disordered. Residues 457-469 (RIEKREGRKEEKN) show a composition bias toward basic and acidic residues. Basic residues predominate over residues 470–485 (RFKKKTKVSVKKQFSK).

This sequence belongs to the TRAFAC class TrmE-Era-EngA-EngB-Septin-like GTPase superfamily. EngA (Der) GTPase family. In terms of assembly, associates with the 50S ribosomal subunit.

Its function is as follows. GTPase that plays an essential role in the late steps of ribosome biogenesis. The sequence is that of GTPase Der from Neisseria meningitidis serogroup A / serotype 4A (strain DSM 15465 / Z2491).